We begin with the raw amino-acid sequence, 135 residues long: Large ribosomal subunit protein uL18 (135 aa).

The interval 1-23 is disordered; it reads MAQTQADTAARKPVGQSVSATRR.

Belongs to the universal ribosomal protein uL18 family. In terms of assembly, part of the 50S ribosomal subunit; part of the 5S rRNA/L5/L18/L25 subcomplex. Contacts the 5S and 23S rRNAs.

This is one of the proteins that bind and probably mediate the attachment of the 5S RNA into the large ribosomal subunit, where it forms part of the central protuberance. The sequence is that of Large ribosomal subunit protein uL18 from Mycobacterium marinum (strain ATCC BAA-535 / M).